A 478-amino-acid polypeptide reads, in one-letter code: Protein nucleotidyltransferase YdiU (478 aa).

The ATP site is built by glycine 74, glycine 76, arginine 77, lysine 97, aspartate 109, glycine 110, arginine 160, and arginine 167. Catalysis depends on aspartate 236, which acts as the Proton acceptor. Mg(2+) is bound by residues asparagine 237 and aspartate 246. Aspartate 246 is an ATP binding site.

The protein belongs to the SELO family. The cofactor is Mg(2+). It depends on Mn(2+) as a cofactor.

The enzyme catalyses L-seryl-[protein] + ATP = 3-O-(5'-adenylyl)-L-seryl-[protein] + diphosphate. It catalyses the reaction L-threonyl-[protein] + ATP = 3-O-(5'-adenylyl)-L-threonyl-[protein] + diphosphate. The catalysed reaction is L-tyrosyl-[protein] + ATP = O-(5'-adenylyl)-L-tyrosyl-[protein] + diphosphate. It carries out the reaction L-histidyl-[protein] + UTP = N(tele)-(5'-uridylyl)-L-histidyl-[protein] + diphosphate. The enzyme catalyses L-seryl-[protein] + UTP = O-(5'-uridylyl)-L-seryl-[protein] + diphosphate. It catalyses the reaction L-tyrosyl-[protein] + UTP = O-(5'-uridylyl)-L-tyrosyl-[protein] + diphosphate. Its function is as follows. Nucleotidyltransferase involved in the post-translational modification of proteins. It can catalyze the addition of adenosine monophosphate (AMP) or uridine monophosphate (UMP) to a protein, resulting in modifications known as AMPylation and UMPylation. The sequence is that of Protein nucleotidyltransferase YdiU from Chromobacterium violaceum (strain ATCC 12472 / DSM 30191 / JCM 1249 / CCUG 213 / NBRC 12614 / NCIMB 9131 / NCTC 9757 / MK).